A 161-amino-acid polypeptide reads, in one-letter code: Regulator of ribonuclease activity A (161 aa).

The protein belongs to the RraA family. In terms of assembly, homotrimer. Binds to both RNA-binding sites in the C-terminal region of Rne and to RhlB.

The protein resides in the cytoplasm. Globally modulates RNA abundance by binding to RNase E (Rne) and regulating its endonucleolytic activity. Can modulate Rne action in a substrate-dependent manner by altering the composition of the degradosome. Modulates RNA-binding and helicase activities of the degradosome. This is Regulator of ribonuclease activity A from Idiomarina loihiensis (strain ATCC BAA-735 / DSM 15497 / L2-TR).